Consider the following 461-residue polypeptide: Cysteine--tRNA ligase (461 aa).

Cysteine 30 is a binding site for Zn(2+). Residues 32-42 carry the 'HIGH' region motif; the sequence is VTIYDLCHIGH. 3 residues coordinate Zn(2+): cysteine 211, histidine 236, and glutamate 240. Positions 268-272 match the 'KMSKS' region motif; it reads KMSKS. Residue lysine 271 participates in ATP binding.

It belongs to the class-I aminoacyl-tRNA synthetase family. As to quaternary structure, monomer. It depends on Zn(2+) as a cofactor.

It localises to the cytoplasm. It catalyses the reaction tRNA(Cys) + L-cysteine + ATP = L-cysteinyl-tRNA(Cys) + AMP + diphosphate. In Shewanella putrefaciens (strain CN-32 / ATCC BAA-453), this protein is Cysteine--tRNA ligase.